A 174-amino-acid chain; its full sequence is Peptide methionine sulfoxide reductase MsrA (174 aa).

The active site involves Cys10.

Belongs to the MsrA Met sulfoxide reductase family.

It catalyses the reaction L-methionyl-[protein] + [thioredoxin]-disulfide + H2O = L-methionyl-(S)-S-oxide-[protein] + [thioredoxin]-dithiol. It carries out the reaction [thioredoxin]-disulfide + L-methionine + H2O = L-methionine (S)-S-oxide + [thioredoxin]-dithiol. Its function is as follows. Has an important function as a repair enzyme for proteins that have been inactivated by oxidation. Catalyzes the reversible oxidation-reduction of methionine sulfoxide in proteins to methionine. This Pseudarthrobacter chlorophenolicus (strain ATCC 700700 / DSM 12829 / CIP 107037 / JCM 12360 / KCTC 9906 / NCIMB 13794 / A6) (Arthrobacter chlorophenolicus) protein is Peptide methionine sulfoxide reductase MsrA.